We begin with the raw amino-acid sequence, 1416 residues long: Uveal autoantigen with coiled-coil domains and ankyrin repeats (1416 aa).

N-acetylmethionine is present on Met1. The segment at Met1–Ala24 is disordered. ANK repeat units follow at residues Leu38–Val66, Glu67–Thr96, Ala100–His129, Gln133–Ala162, Asp166–Ser195, and Gln199–Leu228. Coiled coils occupy residues Val286–Lys374 and Glu438–Thr1386. Lys1035 participates in a covalent cross-link: Glycyl lysine isopeptide (Lys-Gly) (interchain with G-Cter in SUMO2).

In terms of assembly, component of the apoptosome complex, composed of APAF1, pro-caspase-9 and UACA. In the complex, it probably interacts directly with APAF1. Interacts with LGALS3, ARF6 and ACTB. Interacts with RAB39A. In terms of tissue distribution, highly expressed in skeletal muscle, heart, kidney and pancreas. Expressed in choroid, retina and epidermal melanocytes. Expressed in eye muscles and thyroid follicular cells.

The protein localises to the nucleus. Its subcellular location is the cytoplasm. It localises to the cytoskeleton. Functionally, regulates APAF1 expression and plays an important role in the regulation of stress-induced apoptosis. Promotes apoptosis by regulating three pathways, apoptosome up-regulation, LGALS3/galectin-3 down-regulation and NF-kappa-B inactivation. Regulates the redistribution of APAF1 into the nucleus after proapoptotic stress. Down-regulates the expression of LGALS3 by inhibiting NFKB1. Modulates isoactin dynamics to regulate the morphological alterations required for cell growth and motility. Interaction with ARF6 may modulate cell shape and motility after injury. May be involved in multiple neurite formation. The chain is Uveal autoantigen with coiled-coil domains and ankyrin repeats (UACA) from Homo sapiens (Human).